We begin with the raw amino-acid sequence, 189 residues long: MKSSSHLKQEALNYRFNSNVPLKLYLTTCISIVEEAQNSARCNNMERAYLLYIRYLDLCLNRLVHHSEVNTSVESLYKREYFQLLKLEVPAIMKITEELKIKIDARYKSLANNVATSTYVRSPAVMTTNPSDEINLPSSFDEQKFNQSISWFNHSSKHFSAQSDSNNEYPELPELNATSTSVTYTMPAL.

Belongs to the RFU1 family.

Its subcellular location is the endosome. Its function is as follows. Inhibitor of the DOA4 deubiquitinase involved in the regulation of protein degradation by the proteasome and maintenance of a normal level of free ubiquitin. This is Regulator of free ubiquitin chains 1 (RFU1) from Kluyveromyces lactis (strain ATCC 8585 / CBS 2359 / DSM 70799 / NBRC 1267 / NRRL Y-1140 / WM37) (Yeast).